Reading from the N-terminus, the 345-residue chain is SLAM family member 5 (345 aa).

The first 21 residues, 1–21 (MAQHHLWILLLCLQTWPEAAG), serve as a signal peptide directing secretion. Residues 22 to 225 (KDSEIFTVNG…AMGFRTHHTG (204 aa)) are Extracellular-facing. In terms of domain architecture, Ig-like V-type spans 26 to 129 (IFTVNGILGE…TTKRYNLQIY (104 aa)). An Ig-like C2-type domain is found at 135-207 (PKITQSLMAS…PVSNNSDSIS (73 aa)). A glycan (N-linked (GlcNAc...) asparagine) is linked at Asn-150. A disulfide bridge connects residues Cys-155 and Cys-193. Residues 226-246 (LLSVLAMFFLLVLILSSVFLF) traverse the membrane as a helical segment. Residues 247-345 (RLFKRRQGRI…PGTSSYEIVI (99 aa)) lie on the Cytoplasmic side of the membrane. The ITSM 1 motif lies at 277–282 (TIYTYI). A Phosphotyrosine modification is found at Tyr-279. Tyr-296 bears the Phosphotyrosine; by LYN mark. The ITSM 2 signature appears at 314-319 (TVYSEV). Tyr-316 bears the Phosphotyrosine mark. Positions 326–345 (GKASTQDSKPPGTSSYEIVI) are disordered. Positions 328-345 (ASTQDSKPPGTSSYEIVI) are enriched in polar residues. The residue at position 341 (Tyr-341) is a Phosphotyrosine; by FES.

Homodimer; via its extracellular domain. Forms a head to tail dimer with a CD48 molecule from another cell. Interacts with SH2 domain-containing proteins SH2D1A/SAP and SH2D1B/EAT-2. Interacts with tyrosine-protein phosphatases PTPN6/SHP-1 and PTPN11//SHP-2 via its phosphorylated cytoplasmic domain, and this interaction is blocked by SH2D1A. Interacts (via phosphorylated ITSM 1 and 2) with INPP5D/SHIP1. Post-translationally, phosphorylated by tyrosine-protein kinase LCK on tyrosine residues following ligation induced by agonist monoclonal antibody. The association with SH2D1A is dependent of tyrosine phosphorylation of its cytoplasmic domain. Phosphorylated on Tyr-296 and Tyr-316 following platelet aggregation. Phosphorylated on tyrosine residues upon high affinity immunoglobulin epsilon receptor aggregation in mast cells. In terms of processing, N-glycosylated. Predominantly expressed in hematopoietic tissues, such as lymph node, spleen and peripheral leukocytes. Expressed in macrophages, B-cells, monocytes, platelets, thymocytes, T-cells and dendritic cells. Highly expressed in memory T-cells. Expressed in mast cells.

It is found in the cell membrane. In terms of biological role, self-ligand receptor of the signaling lymphocytic activation molecule (SLAM) family. SLAM receptors triggered by homo- or heterotypic cell-cell interactions are modulating the activation and differentiation of a wide variety of immune cells and thus are involved in the regulation and interconnection of both innate and adaptive immune response. Activities are controlled by presence or absence of small cytoplasmic adapter proteins, SH2D1A/SAP and/or SH2D1B/EAT-2. Can mediate natural killer (NK) cell cytotoxicity dependent on SH2D1A and SH2D1B. Increases proliferative responses of activated T-cells and SH2D1A/SAP does not seem be required for this process. Homophilic interactions enhance interferon gamma/IFNG secretion in lymphocytes and induce platelet stimulation via a SH2D1A-dependent pathway. May serve as a marker for hematopoietic progenitor cells Required for a prolonged T-cell:B-cell contact, optimal T follicular helper function, and germinal center formation. In germinal centers involved in maintaining B-cell tolerance and in preventing autoimmunity. In mast cells negatively regulates high affinity immunoglobulin epsilon receptor signaling; independent of SH2D1A and SH2D1B but implicating FES and PTPN6/SHP-1. In macrophages enhances LPS-induced MAPK phosphorylation and NF-kappaB activation and modulates LPS-induced cytokine secretion; involving ITSM 2. Positively regulates macroautophagy in primary dendritic cells via stabilization of IRF8; inhibits TRIM21-mediated proteasomal degradation of IRF8. This chain is SLAM family member 5 (CD84), found in Homo sapiens (Human).